The chain runs to 116 residues: Non-specific lipid-transfer protein 5 (116 aa).

Positions 1 to 24 (MARSMKLACVVLVMCMIVAPMAEG) are cleaved as a signal peptide. Disulfide bonds link Cys28–Cys75, Cys38–Cys52, Cys53–Cys98, and Cys73–Cys112.

Belongs to the plant LTP family.

Plant non-specific lipid-transfer proteins transfer phospholipids as well as galactolipids across membranes. May play a role in wax or cutin deposition in the cell walls of expanding epidermal cells and certain secretory tissues. The chain is Non-specific lipid-transfer protein 5 from Lens culinaris (Lentil).